Consider the following 255-residue polypeptide: uncharacterized protein (255 aa).

A run of 2 helical transmembrane segments spans residues 2–22 (LLPAANVIMQLAVPGVGYGVL) and 168–188 (VASVAFLPWPLRAVAGPFNLF).

Its subcellular location is the cell membrane. This is an uncharacterized protein from Mycobacterium tuberculosis (strain ATCC 25618 / H37Rv).